Consider the following 459-residue polypeptide: Fe(3+)-Zn(2+) purple acid phosphatase (459 aa).

The signal sequence occupies residues 1–22 (MGVVKGLLALALVLNVVVVSNG). A Blocked amino end (Gly) modification is found at Gly-23. An N-linked (GlcNAc...) asparagine; partial glycan is attached at Asn-108. Asn-136 carries N-linked (GlcNAc...) asparagine glycosylation. Asp-162 is a Fe cation binding site. Asn-170 carries an N-linked (GlcNAc...) asparagine glycan. Fe cation-binding residues include Asp-191 and Tyr-194. Asp-191 is a binding site for Zn(2+). Zn(2+) is bound at residue Asn-228. N-linked (GlcNAc...) asparagine glycosylation occurs at Asn-238. Zn(2+) is bound at residue His-313. The Proton donor role is filled by His-323. Residue His-350 coordinates Zn(2+). Residue His-352 participates in Fe cation binding. The N-linked (GlcNAc...) asparagine glycan is linked to Asn-423.

Belongs to the metallophosphoesterase superfamily. Purple acid phosphatase family. Homodimer; disulfide-linked. Requires Fe cation as cofactor. The cofactor is Zn(2+).

The protein resides in the secreted. The catalysed reaction is a phosphate monoester + H2O = an alcohol + phosphate. Inhibited by compounds CC24201, CC27209, and MO07123. Inhibited by the tetraoxoanions molybdate and phosphate. Not inhibited by EDTA or tartrate. The polypeptide is Fe(3+)-Zn(2+) purple acid phosphatase (Phaseolus vulgaris (Kidney bean)).